We begin with the raw amino-acid sequence, 622 residues long: Chaperone protein DnaK (622 aa).

At threonine 197 the chain carries Phosphothreonine; by autocatalysis. 2 stretches are compositionally biased toward basic and acidic residues: residues 515 to 528 (LHKE…EAVE) and 575 to 614 (ASKE…KKDD). Disordered regions lie at residues 515–537 (LHKE…DSLV) and 575–622 (ASKE…AEVE).

The protein belongs to the heat shock protein 70 family.

Functionally, acts as a chaperone. This is Chaperone protein DnaK from Campylobacter lari (strain RM2100 / D67 / ATCC BAA-1060).